The primary structure comprises 601 residues: Elongation factor 4 (601 aa).

Positions 6 to 188 constitute a tr-type G domain; the sequence is NYIRNFSIVA…AIVTQLPSPR (183 aa). GTP-binding positions include 18–23 and 135–138; these read DHGKST and NKVD.

Belongs to the TRAFAC class translation factor GTPase superfamily. Classic translation factor GTPase family. LepA subfamily.

Its subcellular location is the cell inner membrane. The enzyme catalyses GTP + H2O = GDP + phosphate + H(+). Its function is as follows. Required for accurate and efficient protein synthesis under certain stress conditions. May act as a fidelity factor of the translation reaction, by catalyzing a one-codon backward translocation of tRNAs on improperly translocated ribosomes. Back-translocation proceeds from a post-translocation (POST) complex to a pre-translocation (PRE) complex, thus giving elongation factor G a second chance to translocate the tRNAs correctly. Binds to ribosomes in a GTP-dependent manner. In Bartonella henselae (strain ATCC 49882 / DSM 28221 / CCUG 30454 / Houston 1) (Rochalimaea henselae), this protein is Elongation factor 4.